A 353-amino-acid polypeptide reads, in one-letter code: Outer membrane protein P5 (353 aa).

The signal sequence occupies residues Met1–Ala21. Beta stranded transmembrane passes span Thr27–Ala37, Ser58–Ile69, Leu77–Asp85, His104–Glu115, Leu120–Val128, Gly158–Ala167, Leu172–Gln179, and Ser205–Arg213. Residues Val227–Lys353 form the OmpA-like domain. Cysteines 326 and 338 form a disulfide.

Belongs to the outer membrane OOP (TC 1.B.6) superfamily. OmpA family. As to quaternary structure, monomer and homodimer.

It localises to the cell outer membrane. Its function is as follows. With TolR probably plays a role in maintaining the position of the peptidoglycan cell wall in the periplasm. Acts as a porin with low permeability that allows slow penetration of small solutes; an internal gate slows down solute passage. This is Outer membrane protein P5 from Haemophilus influenzae.